A 359-amino-acid polypeptide reads, in one-letter code: Alanine racemase (359 aa).

K34 functions as the Proton acceptor; specific for D-alanine in the catalytic mechanism. An N6-(pyridoxal phosphate)lysine modification is found at K34. R129 lines the substrate pocket. Residue Y254 is the Proton acceptor; specific for L-alanine of the active site. M302 contributes to the substrate binding site.

Belongs to the alanine racemase family. The cofactor is pyridoxal 5'-phosphate.

It catalyses the reaction L-alanine = D-alanine. Its pathway is amino-acid biosynthesis; D-alanine biosynthesis; D-alanine from L-alanine: step 1/1. Its function is as follows. Catalyzes the interconversion of L-alanine and D-alanine. May also act on other amino acids. This Yersinia pestis protein is Alanine racemase (alr).